The primary structure comprises 246 residues: Sugar fermentation stimulation protein homolog (246 aa).

Belongs to the SfsA family.

This Prochlorococcus marinus (strain MIT 9312) protein is Sugar fermentation stimulation protein homolog.